The following is a 360-amino-acid chain: NAD(P)H-quinone oxidoreductase subunit 1, chloroplastic (360 aa).

The next 9 membrane-spanning stretches (helical) occupy residues 27–47, 98–118, 129–149, 165–185, 203–223, 248–268, 269–289, 297–317, and 340–360; these read IWIF…VLVI, FSIG…VIPF, IGIF…LMSG, AAQS…ISLL, FWGW…ISSL, YSGI…LISS, LFVT…ISIL, IFGT…FLFI, and FLLP…LFSL.

The protein belongs to the complex I subunit 1 family. NDH is composed of at least 16 different subunits, 5 of which are encoded in the nucleus.

The protein resides in the plastid. Its subcellular location is the chloroplast thylakoid membrane. The enzyme catalyses a plastoquinone + NADH + (n+1) H(+)(in) = a plastoquinol + NAD(+) + n H(+)(out). It catalyses the reaction a plastoquinone + NADPH + (n+1) H(+)(in) = a plastoquinol + NADP(+) + n H(+)(out). In terms of biological role, NDH shuttles electrons from NAD(P)H:plastoquinone, via FMN and iron-sulfur (Fe-S) centers, to quinones in the photosynthetic chain and possibly in a chloroplast respiratory chain. The immediate electron acceptor for the enzyme in this species is believed to be plastoquinone. Couples the redox reaction to proton translocation, and thus conserves the redox energy in a proton gradient. The protein is NAD(P)H-quinone oxidoreductase subunit 1, chloroplastic of Nasturtium officinale (Watercress).